We begin with the raw amino-acid sequence, 310 residues long: QRTLKVSSSGPRSFSSRSFSSGPSSRISSSSYSRVGSNSSFRSGVGFGPNYGMGLGSSIGVGGITAVSVNQSLLNPLKLELDPSIQAVRTQEKEQIKTLNNKFASFIDKVRFLEQQNKILETKWSFLQQQKTSQSNLDGLFEKYITNLRRQLDSMGQEKLKLEVELGNMQGLVEDFKKKYEDEINKRTEMENEFVLIKKDVDEAYMNKVELESRLEGLTDEINFLRHLYEEEIKEMQSQISDTSVVVSMDNSRSLDLDGIIADVRAQYEEIANRSRAEAETMYQIKYEELQLLAGKHGDDLRHTKTEISE.

The interval 1-38 (QRTLKVSSSGPRSFSSRSFSSGPSSRISSSSYSRVGSN) is disordered. A Glycyl lysine isopeptide (Lys-Gly) (interchain with G-Cter in SUMO2) cross-link involves residue Lys-5. Phosphoserine occurs at positions 7, 9, 15, and 16. Positions 7–38 (SSSGPRSFSSRSFSSGPSSRISSSSYSRVGSN) are enriched in low complexity. At Arg-17 the chain carries Omega-N-methylarginine. Phosphoserine occurs at positions 18, 21, and 25. Arg-26 carries the omega-N-methylarginine modification. Residues Ser-28, Ser-31, and Ser-33 each carry the phosphoserine modification. Arg-34 is modified (omega-N-methylarginine). Ser-37 is subject to Phosphoserine. An Asymmetric dimethylarginine; alternate modification is found at Arg-42. The residue at position 42 (Arg-42) is an Omega-N-methylarginine; alternate. The interval 92 to 127 (EKEQIKTLNNKFASFIDKVRFLEQQNKILETKWSFL) is coil 1A. Positions 92–310 (EKEQIKTLNN…LRHTKTEISE (219 aa)) constitute an IF rod domain. N6-malonyllysine is present on Lys-102. Residues Lys-123 and Lys-131 each participate in a glycyl lysine isopeptide (Lys-Gly) (interchain with G-Cter in SUMO2) cross-link. Residues 128 to 144 (QQQKTSQSNLDGLFEKY) are linker 1. Residues 145–236 (ITNLRRQLDS…HLYEEEIKEM (92 aa)) are coil 1B. A Glycyl lysine isopeptide (Lys-Gly) (interchain with G-Cter in SUMO1); alternate cross-link involves residue Lys-198. Residue Lys-198 forms a Glycyl lysine isopeptide (Lys-Gly) (interchain with G-Cter in SUMO2); alternate linkage. Lys-208 bears the N6-acetyllysine mark. Position 229 is a phosphotyrosine (Tyr-229). A linker 12 region spans residues 237–260 (QSQISDTSVVVSMDNSRSLDLDGI). A phosphoserine mark is found at Ser-254 and Ser-275. The segment at 261 to 310 (IADVRAQYEEIANRSRAEAETMYQIKYEELQLLAGKHGDDLRHTKTEISE) is coil 2. Lys-286 is covalently cross-linked (Glycyl lysine isopeptide (Lys-Gly) (interchain with G-Cter in SUMO2)). Residue Lys-296 forms a Glycyl lysine isopeptide (Lys-Gly) (interchain with G-Cter in SUMO2); alternate linkage. An N6-acetyllysine; alternate modification is found at Lys-296. Lys-305 participates in a covalent cross-link: Glycyl lysine isopeptide (Lys-Gly) (interchain with G-Cter in SUMO2).

Belongs to the intermediate filament family. Heterotetramer of two type I and two type II keratins. Forms a heterodimer with KRT18. Associates with KRT20. Interacts with PNN. When associated with KRT19, interacts with DMD. Interacts with APEX1. Interacts with GPER1. Interacts with EPPK1. Interacts with PKP1 and PKP2. Post-translationally, O-glycosylated. O-GlcNAcylation at multiple sites increases solubility, and decreases stability by inducing proteasomal degradation. In terms of processing, O-glycosylated (O-GlcNAcylated), in a cell cycle-dependent manner.

It is found in the cytoplasm. It localises to the nucleus. The protein localises to the nucleoplasm. Its subcellular location is the nucleus matrix. Together with KRT19, helps to link the contractile apparatus to dystrophin at the costameres of striated muscle. The polypeptide is Keratin, type II cytoskeletal 8 (Potorous tridactylus (Potoroo)).